Consider the following 1462-residue polypeptide: Glucosyltransferase-S (1462 aa).

The interval 35-164 (SSVSAETEQQ…RQTAAQENKN (130 aa)) is disordered. Polar residues predominate over residues 37–52 (VSAETEQQTSDKVVTQ). The span at 71–85 (TKQAQTEQTQAQSQA) shows a compositional bias: low complexity. Over residues 86 to 108 (NVADTSTSITKETPSQNITTQAN) the composition is skewed to polar residues. Positions 109 to 133 (SDDKTVTNTKSEEAQTSEERTKQAE) are enriched in basic and acidic residues. A compositionally biased stretch (low complexity) spans 134-149 (EAQATASSQALTQAKA). Residues 154-163 (QRQTAAQENK) are compositionally biased toward polar residues. Cell wall-binding repeat units follow at residues 171-190 (IPNVKQIDGKYYYIGSDGQP), 192-211 (KNFALTVNNKVLYFDKNTGA), 1095-1115 (STGFVNDGNGMTFYSTSGYQA), 1116-1136 (KNSFVQDAKGNWYYFDNNGHM), 1137-1156 (VYGLQHLNGEVQYFLSNGVQ), 1180-1201 (SNGYYSFDNDSKWRYFDASGVM), 1202-1221 (AVGLKTINGNTQYFDQDGYQ), 1223-1244 (KGAWITGSDGKKRYFDDGSGNM), 1246-1266 (VNRFANDKNGDWYYLNSDGIA), 1267-1286 (LVGVQTINGKTYYFGQDGKQ), 1310-1330 (RNIFATDSQNNWYYFGSDGVA), 1331-1350 (VTGSQTIAGKKLYFASDGKQ), 1352-1372 (KGSFVTYNGKVHYYHADSGEL), and 1374-1394 (VNRFEADKDGNWYYLDSNGEA).

Belongs to the glycosyl hydrolase 70 family.

It is found in the secreted. The catalysed reaction is [(1-&gt;6)-alpha-D-glucosyl](n) + sucrose = [(1-&gt;6)-alpha-D-glucosyl](n+1) + D-fructose. Functionally, production of extracellular glucans, that are thought to play a key role in the development of the dental plaque because of their ability to adhere to smooth surfaces and mediate the aggregation of bacterial cells and food debris. This chain is Glucosyltransferase-S (gtfD), found in Streptococcus mutans serotype c (strain ATCC 700610 / UA159).